Consider the following 194-residue polypeptide: MEKLIFATNNPHKLNEIRHILEGKVEIVGLDEIGCREDIPETADTLQGNALLKAEFVHKRYGLPCFADDTGLEVEALDRAPGVHSARYAGEPTNADANVRKLLEALSSVPHPRKACFRTVIALIDDHGKHFFEGKIEGTIASECRGSGGFGYDPVFIPEGHTLSFAEMGEETKNQISHRALAVAQLRDFLLCAK.

Residue 8–13 (TNNPHK) participates in substrate binding. The Proton acceptor role is filled by D69. D69 lines the Mg(2+) pocket. Substrate contacts are provided by residues T70, 150–153 (FGYD), K173, and 178–179 (HR).

It belongs to the HAM1 NTPase family. Homodimer. It depends on Mg(2+) as a cofactor.

It carries out the reaction XTP + H2O = XMP + diphosphate + H(+). The enzyme catalyses dITP + H2O = dIMP + diphosphate + H(+). It catalyses the reaction ITP + H2O = IMP + diphosphate + H(+). Pyrophosphatase that catalyzes the hydrolysis of nucleoside triphosphates to their monophosphate derivatives, with a high preference for the non-canonical purine nucleotides XTP (xanthosine triphosphate), dITP (deoxyinosine triphosphate) and ITP. Seems to function as a house-cleaning enzyme that removes non-canonical purine nucleotides from the nucleotide pool, thus preventing their incorporation into DNA/RNA and avoiding chromosomal lesions. This Porphyromonas gingivalis (strain ATCC BAA-308 / W83) protein is dITP/XTP pyrophosphatase.